A 392-amino-acid chain; its full sequence is Nuclear speckle splicing regulatory protein 1 homolog (392 aa).

Disordered stretches follow at residues 1 to 73 (MASK…IFDY), 113 to 169 (RQLE…AFND), and 187 to 357 (LLND…ARLD). 5 stretches are compositionally biased toward basic and acidic residues: residues 54–65 (KAAEREHQKAEA), 113–132 (RQLE…REKE), 149–160 (KQQEEVKKHREQ), 205–238 (QKNV…KSIY), and 313–357 (KSIE…ARLD). The stretch at 76–132 (NYDEIQAIKNEKKEEARKADKNRESKYAENIIKAHARRQLEQFSREERQQLREREKE) forms a coiled coil.

The protein belongs to the NSRP1 family. In terms of tissue distribution, expressed in the intestine, nervous system and head neurons in both larvae and adults. Expressed in the distal tip cell.

The protein resides in the cytoplasm. It is found in the nucleus. Functionally, required for the cessation of distal tip cell migration at the end of larval morphogenesis. This is Nuclear speckle splicing regulatory protein 1 homolog (ccdc-55) from Caenorhabditis elegans.